The primary structure comprises 1433 residues: MRNYNSFESITIRLASPERIKEWSFGEVKKPETINYRTLKPERDGLFCEKIFGTTKDWECYCGKFKSIRYKGVVCDKCGVEVTHSKVRRERMGHIELAAPVSHIWYYRSVPSRMGLLLDMTINQLKSVLYFEKYVIIDPADSGRNRGELIDEDEYHNYLDEYGDKFIAGIGGDAIKELLARIDVDAEARVIRQKIQDKNKISDKRIFKRLEVLEAFRDSGNRPEWMVLDVVPVIPPELRPMVQLEGGRFATSDLNDLYRRVINRNNRLKRLLALKAPEIIVRNEKRMLQEAVGALFDNSRRKRTVKGKGNRPLKSISDMLKGKQGRFRQNLLGKRVDYSGRSVIVVGPELKYHQMGLPKKMALELFKPFIMKRLVDLELAPNIKSAKKKIEAEDKEVFDVLETVVKEHPVLLNRAPTLHRLGIQAFLPVLVEGKAIKLHPLVCHAFNADFDGDQMAIHVPLAPKAQLETWMLMLSPHNILNPANGQPICGPTQDIVLGIYYLTSEVKDAKGEGKFFTGLEEVMYAIETKTVEIRSKISVLHEGKIIETTPGRLIFNQVMPKGYVYINRTLGDKETNKIIADVYEKFGPGITVVMLDEIKRLGYRYATVFAPTISIDDIRVSPQKEGLVNDANKEVEKADMEYRKGIITNEERRKKVIEIWTKTNDRITEGMFKELEKDQAGFNPVYVMAASGARGSKQQIRQLAGMRGLMAKPSGEIIELAIRSNFREGLGVLEFFISTHGARKGLADTALKTADAGYLTRRLVDISQDVIVSEDDCGTKANITLGIVKEGENVIVSLADRVFGRYTAEDLVDPVTEKVVFPKDTLITRALGQQIENLGYDKIKVRSPLTCRSRHGICTKCYGMDMARLVPAEIGEAVGTIAAQSIGQPGTQLTMRTFHVGGAASATIQEKEHKVPFRSLVKSINGRLVTNANGSKVFARRGTIIVNRLIQEFNTESLSSVRIVDGQRLEKGEVFASQVGESIEQRITSDQAGTVSLIGTTLRILGDDIVIPVKIGTILKSEEGQIVEENKALAEFDPYNEVAVSETAGTIVWEDLEIGKNVRRDVDPKTSNIILKVVEQKKDRLVPKVIVGSDGYSVPVDALLQFQNGDKVREGDVIFKIPSVAEKTRDITGGLPRVDELFEARRPKDACTLAEIDGKIEDKGEIVKEKRILYILPDSPEQEKVKVAIPIGKQIRVRQGDFVKRGDQLDEGNFDPHDILAIKGPSALHEYLVSEVQEVYRLQGVHINDKHIEVVVRSMLRKVIITDSGDTSFVNQQQVDKFLFDEENDRVEQEGGSPAQGTPVLLGLTKASLNTESYFSAASFQETTKVLTDAAIKGKTDNLMGLKENVIIGHMIPAGTGMKKYRDIEVFKEMPGDLDWDLDSEEEEEELSELSEAAPVSTATLSKLVAEEDEDEDELEEEADDSDDEDDDD.

The Zn(2+) site is built by Cys60, Cys62, Cys75, and Cys78. Residues Asp449, Asp451, and Asp453 each contribute to the Mg(2+) site. Residues Cys777, Cys851, Cys858, and Cys861 each contribute to the Zn(2+) site. Composition is skewed to acidic residues over residues 1383–1393 (DSEEEEEELSE) and 1411–1433 (EEDE…DDDD). The interval 1383 to 1433 (DSEEEEEELSELSEAAPVSTATLSKLVAEEDEDEDELEEEADDSDDEDDDD) is disordered.

It belongs to the RNA polymerase beta' chain family. In terms of assembly, the RNAP catalytic core consists of 2 alpha, 1 beta, 1 beta' and 1 omega subunit. When a sigma factor is associated with the core the holoenzyme is formed, which can initiate transcription. Mg(2+) serves as cofactor. The cofactor is Zn(2+).

The catalysed reaction is RNA(n) + a ribonucleoside 5'-triphosphate = RNA(n+1) + diphosphate. Its function is as follows. DNA-dependent RNA polymerase catalyzes the transcription of DNA into RNA using the four ribonucleoside triphosphates as substrates. In Leptospira biflexa serovar Patoc (strain Patoc 1 / Ames), this protein is DNA-directed RNA polymerase subunit beta'.